A 93-amino-acid polypeptide reads, in one-letter code: RNA-binding protein Hfq (93 aa).

In terms of domain architecture, Sm spans 9–68 (DPFLNALRRERVPVSIYLVNGIKLQGQVESFDQFVILLKNTVSQMVYKHAISTVVPARPF). Residues 70–93 (VNSHTAAPSPAGGFNGQQDDNNDQ) form a disordered region.

Belongs to the Hfq family. As to quaternary structure, homohexamer.

Its function is as follows. RNA chaperone that binds small regulatory RNA (sRNAs) and mRNAs to facilitate mRNA translational regulation in response to envelope stress, environmental stress and changes in metabolite concentrations. Also binds with high specificity to tRNAs. This Shewanella sediminis (strain HAW-EB3) protein is RNA-binding protein Hfq.